The sequence spans 265 residues: tRNA (guanine-N(1)-)-methyltransferase (265 aa).

S-adenosyl-L-methionine-binding positions include Gly-119 and 139–144; that span reads IGDYVL.

Belongs to the RNA methyltransferase TrmD family. In terms of assembly, homodimer.

The protein resides in the cytoplasm. The catalysed reaction is guanosine(37) in tRNA + S-adenosyl-L-methionine = N(1)-methylguanosine(37) in tRNA + S-adenosyl-L-homocysteine + H(+). Functionally, specifically methylates guanosine-37 in various tRNAs. This Alcanivorax borkumensis (strain ATCC 700651 / DSM 11573 / NCIMB 13689 / SK2) protein is tRNA (guanine-N(1)-)-methyltransferase.